Here is a 96-residue protein sequence, read N- to C-terminus: Uteroglobin (96 aa).

The N-terminal stretch at Met-1–Ala-19 is a signal peptide.

This sequence belongs to the secretoglobin family. As to quaternary structure, antiparallel homodimer; disulfide-linked. Interaction with LMBR1L is controversial. Club cells (nonciliated cells of the surface epithelium of the pulmonary airways).

It is found in the secreted. In terms of biological role, binds phosphatidylcholine, phosphatidylinositol, polychlorinated biphenyls (PCB) and weakly progesterone, potent inhibitor of phospholipase A2. The chain is Uteroglobin (Scgb1a1) from Rattus norvegicus (Rat).